Reading from the N-terminus, the 154-residue chain is MIDIGITKLAIIGGIALIVIGPEKLPGLAKTIGTLLGRARRYVADVKDEVNRSMDLDELKKMKDTVESAVRDVDNTIQTSAADFEKNWADATAQAADTPFNDFSPTPPAYRHPNKKWRVKQGATPNWYKARAGIRTRALSGAARVARFRPHKVN.

Residues 1–21 form a helical membrane-spanning segment; sequence MIDIGITKLAIIGGIALIVIG.

It belongs to the TatB family. The Tat system comprises two distinct complexes: a TatABC complex, containing multiple copies of TatA, TatB and TatC subunits, and a separate TatA complex, containing only TatA subunits. Substrates initially bind to the TatABC complex, which probably triggers association of the separate TatA complex to form the active translocon.

Its subcellular location is the cell inner membrane. In terms of biological role, part of the twin-arginine translocation (Tat) system that transports large folded proteins containing a characteristic twin-arginine motif in their signal peptide across membranes. Together with TatC, TatB is part of a receptor directly interacting with Tat signal peptides. TatB may form an oligomeric binding site that transiently accommodates folded Tat precursor proteins before their translocation. The protein is Sec-independent protein translocase protein TatB of Albidiferax ferrireducens (strain ATCC BAA-621 / DSM 15236 / T118) (Rhodoferax ferrireducens).